A 154-amino-acid chain; its full sequence is MFILRLFSPAFGEIEADESQIFSFPEGLPGFSHLKKFLLIRHRDNSPFFFLIAIDEPEIYFILIEPSRLLADYHVELSCEQQGLLHLSEETPVLSLNIVRIPPEAKEMIINLKAPVVFNLQEKIARQIILDADYPVRYPIPLSKVKEKADAGTK.

It belongs to the FliW family. Interacts with translational regulator CsrA and flagellin(s).

It localises to the cytoplasm. Functionally, acts as an anti-CsrA protein, binds CsrA and prevents it from repressing translation of its target genes, one of which is flagellin. Binds to flagellin and participates in the assembly of the flagellum. The polypeptide is Flagellar assembly factor FliW (Carboxydothermus hydrogenoformans (strain ATCC BAA-161 / DSM 6008 / Z-2901)).